We begin with the raw amino-acid sequence, 61 residues long: MGKTGSVTWVKIKKRNSNEYRLVPTKWQDYKKPGPNQKYTSDGKKRRRIRRSQKSILGVRS.

The segment at 23-61 (VPTKWQDYKKPGPNQKYTSDGKKRRRIRRSQKSILGVRS) is disordered. Residues 44–53 (KKRRRIRRSQ) are compositionally biased toward basic residues.

This is an uncharacterized protein from Archaeoglobus fulgidus (strain ATCC 49558 / DSM 4304 / JCM 9628 / NBRC 100126 / VC-16).